The following is a 279-amino-acid chain: Protein phosphatase 1 regulatory subunit 3E (279 aa).

2 positions are modified to phosphoserine: S16 and S33. Residues R28–R89 form a disordered region. A compositionally biased stretch (basic residues) spans A51–R65. S66 bears the Phosphoserine mark. The PP1-binding motif motif lies at R87 to F90. A CBM21 domain is found at A154–L259. The glycogen-binding motif stretch occupies residues G176 to W198. The interval W248–Y256 is substrate-binding motif.

As to expression, expressed in liver and heart, with low levels in skeletal muscle.

Its function is as follows. Acts as a glycogen-targeting subunit for PP1. PP1 is involved in glycogen metabolism and contributes to the activation of glycogen synthase leading to an increase in glycogen synthesis. The chain is Protein phosphatase 1 regulatory subunit 3E (Ppp1r3e) from Rattus norvegicus (Rat).